The primary structure comprises 368 residues: Histidinol-phosphate aminotransferase (368 aa).

Lys-215 bears the N6-(pyridoxal phosphate)lysine mark.

Belongs to the class-II pyridoxal-phosphate-dependent aminotransferase family. Histidinol-phosphate aminotransferase subfamily. As to quaternary structure, homodimer. Pyridoxal 5'-phosphate is required as a cofactor.

It carries out the reaction L-histidinol phosphate + 2-oxoglutarate = 3-(imidazol-4-yl)-2-oxopropyl phosphate + L-glutamate. Its pathway is amino-acid biosynthesis; L-histidine biosynthesis; L-histidine from 5-phospho-alpha-D-ribose 1-diphosphate: step 7/9. This Buchnera aphidicola subsp. Acyrthosiphon pisum (strain APS) (Acyrthosiphon pisum symbiotic bacterium) protein is Histidinol-phosphate aminotransferase (hisC).